Reading from the N-terminus, the 627-residue chain is UvrABC system protein C (627 aa).

The GIY-YIG domain maps to Asn22 to Val100. The region spanning Gln210 to Val245 is the UVR domain.

The protein belongs to the UvrC family. Interacts with UvrB in an incision complex.

The protein resides in the cytoplasm. Its function is as follows. The UvrABC repair system catalyzes the recognition and processing of DNA lesions. UvrC both incises the 5' and 3' sides of the lesion. The N-terminal half is responsible for the 3' incision and the C-terminal half is responsible for the 5' incision. This Brucella abortus biovar 1 (strain 9-941) protein is UvrABC system protein C.